Here is a 368-residue protein sequence, read N- to C-terminus: DNA replication and repair protein RecF (368 aa).

Residue 30-37 (GNNAQGKT) coordinates ATP.

Belongs to the RecF family.

The protein localises to the cytoplasm. The RecF protein is involved in DNA metabolism; it is required for DNA replication and normal SOS inducibility. RecF binds preferentially to single-stranded, linear DNA. It also seems to bind ATP. The polypeptide is DNA replication and repair protein RecF (Streptococcus pyogenes serotype M5 (strain Manfredo)).